The following is a 374-amino-acid chain: S-adenosylmethionine:tRNA ribosyltransferase-isomerase (374 aa).

It belongs to the QueA family. As to quaternary structure, monomer.

The protein localises to the cytoplasm. The enzyme catalyses 7-aminomethyl-7-carbaguanosine(34) in tRNA + S-adenosyl-L-methionine = epoxyqueuosine(34) in tRNA + adenine + L-methionine + 2 H(+). Its pathway is tRNA modification; tRNA-queuosine biosynthesis. In terms of biological role, transfers and isomerizes the ribose moiety from AdoMet to the 7-aminomethyl group of 7-deazaguanine (preQ1-tRNA) to give epoxyqueuosine (oQ-tRNA). The sequence is that of S-adenosylmethionine:tRNA ribosyltransferase-isomerase from Prochlorococcus marinus (strain AS9601).